Here is a 923-residue protein sequence, read N- to C-terminus: Alanine--tRNA ligase (923 aa).

The Zn(2+) site is built by His611, His615, Cys714, and His718. Over residues 886-903 (VGGGGGGRPNMARGGGTD) the composition is skewed to gly residues. The interval 886 to 909 (VGGGGGGRPNMARGGGTDPSGMDN) is disordered.

This sequence belongs to the class-II aminoacyl-tRNA synthetase family. Requires Zn(2+) as cofactor.

The protein resides in the cytoplasm. The catalysed reaction is tRNA(Ala) + L-alanine + ATP = L-alanyl-tRNA(Ala) + AMP + diphosphate. Functionally, catalyzes the attachment of alanine to tRNA(Ala) in a two-step reaction: alanine is first activated by ATP to form Ala-AMP and then transferred to the acceptor end of tRNA(Ala). Also edits incorrectly charged Ser-tRNA(Ala) and Gly-tRNA(Ala) via its editing domain. The polypeptide is Alanine--tRNA ligase (Methanococcoides burtonii (strain DSM 6242 / NBRC 107633 / OCM 468 / ACE-M)).